Consider the following 1215-residue polypeptide: Endoplasmic reticulum transmembrane helix translocase (1215 aa).

The Cytoplasmic portion of the chain corresponds to 1–27 (MTKKSFVSSPIVRDSTLLVPKSLIAKP). The helical transmembrane segment at 28-43 (YVLPFFPLYATFAQLY) threads the bilayer. Topologically, residues 44–56 (FQQYDRYIKGPEW) are lumenal. Residues 57–76 (TFVYLGTLVSLNILVMLMPA) traverse the membrane as a helical segment. Over 77-188 (WNVKIKAKFN…ENSFDIPIPT (112 aa)) the chain is Cytoplasmic. The segment at 156 to 185 (KIGDFQKCKGHSGDLTHLKRLYGENSFDIP) is A-domain; part 1. Residues 189 to 216 (FMELFKEHAVAPLFVFQVFCVALWLLDE) form a helical membrane-spanning segment. Phe-217 is a topological domain (lumenal). Residues 218-246 (WYYSLFNLFMIISMEAAAVFQRLTALKEF) form a helical membrane-spanning segment. At 247–395 (RTMGIKPYTI…IYSAERVSVD (149 aa)) the chain is on the cytoplasmic side. An A-domain; part 2 region spans residues 250–390 (GIKPYTINVF…LVRVMIYSAE (141 aa)). Ser-324 is subject to Phosphoserine. Residues 396 to 425 (NKEALMFILFLLIFAVIASWYVWVEGTKMG) traverse the membrane as a helical segment. Topologically, residues 426–427 (RI) are lumenal. A run of 2 helical transmembrane segments spans residues 428-442 (QSKL…ITSV) and 446-464 (ELPM…ALAK). The Cytoplasmic portion of the chain corresponds to 465-971 (FYVYCTEPFR…APFTSKLANV (507 aa)). The P-domain; part 1 stretch occupies residues 466-495 (YVYCTEPFRIPFAGRIDVCCFDKTGTLTGE). Asp-487 acts as the 4-aspartylphosphate intermediate in catalysis. Residues Asp-487 and Thr-489 each coordinate Mg(2+). Residues 487-489 (DKT), Phe-582, Arg-634, Asp-699, and 816-820 (DGTND) each bind ATP. Positions 497–674 (LVFEGLAGIS…FNGFLIFHCP (178 aa)) are N-domain. Residues 677-837 (DDAIETIKML…HVGIALLNGT (161 aa)) are P-domain; part 2. Position 816 (Asp-816) interacts with Mg(2+). Residues 838 to 953 (EEGLKKLGEQ…DAQGDEAPAL (116 aa)) are arm-like. Ser-936 is subject to Phosphoserine. The interval 954–969 (KLGDASCAAPFTSKLA) is P-domain; part 3. A helical transmembrane segment spans residues 972–1011 (SAVTNIIRQGRCALVNTIQMYKILALNCLISAYSLSIIYM). Over 1012 to 1017 (AGVKFG) the chain is Lumenal. A helical transmembrane segment spans residues 1018–1035 (DGQATVSGLLLSVCFLSI). Residues 1036–1055 (SRGKPLEKLSKQRPQSGIFN) are Cytoplasmic-facing. Residues 1056–1084 (VYIMGSILSQFAVHIATLVYITTEIYKLE) traverse the membrane as a helical segment. Residues 1085–1099 (PREPQVDLEKEFAPS) lie on the Lumenal side of the membrane. A helical membrane pass occupies residues 1100 to 1121 (LLNTGIFIIQLVQQVSTFAVNY). The Cytoplasmic portion of the chain corresponds to 1122–1133 (QGEPFRENIRSN). The helical transmembrane segment at 1134–1151 (KGMYYGLLGVTGLALASA) threads the bilayer. Topologically, residues 1152-1168 (TEFLPELNEAMKFVPMT) are lumenal. A helical membrane pass occupies residues 1169-1197 (DDFKIKLTLTLLLDFFGSWGVEHFFKFFF). Residues 1198-1215 (MDDKPSDISVQQVKIASK) lie on the Cytoplasmic side of the membrane.

It belongs to the cation transport ATPase (P-type) (TC 3.A.3) family. Type V subfamily. Mg(2+) serves as cofactor.

The protein localises to the endoplasmic reticulum membrane. The catalysed reaction is [protein]-with a C-terminal TM segment(out) + ATP + H2O = [protein]-with a C-terminal TM segment(in) + ADP + phosphate + H(+). Its activity is regulated as follows. The ATPase activity is stimulated by phosphatidylinositol 4-phosphate (PI4P). Its function is as follows. Endoplasmic reticulum translocase required to remove mitochondrial transmembrane proteins mistargeted to the endoplasmic reticulum. Acts as a dislocase that mediates the ATP-dependent extraction of mislocalized mitochondrial transmembrane proteins from the endoplasmic reticulum membrane. Specifically binds mitochondrial tail-anchored transmembrane proteins: has an atypically large substrate-binding pocket that recognizes and binds moderately hydrophobic transmembranes with short hydrophilic lumenal domains. This is Endoplasmic reticulum transmembrane helix translocase from Saccharomyces cerevisiae (strain ATCC 204508 / S288c) (Baker's yeast).